The sequence spans 75 residues: Putative sulfur carrier protein YrkI (75 aa).

The active-site Cysteine persulfide intermediate is C14.

The protein belongs to the sulfur carrier protein TusA family.

This Bacillus subtilis (strain 168) protein is Putative sulfur carrier protein YrkI (yrkI).